A 409-amino-acid polypeptide reads, in one-letter code: Argininosuccinate synthase (409 aa).

Residue alanine 9–serine 17 coordinates ATP. Residue tyrosine 86 coordinates L-citrulline. Glycine 116 contributes to the ATP binding site. L-aspartate is bound by residues threonine 118, asparagine 122, and aspartate 123. L-citrulline is bound at residue asparagine 122. 5 residues coordinate L-citrulline: arginine 126, serine 174, serine 183, glutamate 259, and tyrosine 271.

It belongs to the argininosuccinate synthase family. Type 1 subfamily. As to quaternary structure, homotetramer.

It localises to the cytoplasm. The catalysed reaction is L-citrulline + L-aspartate + ATP = 2-(N(omega)-L-arginino)succinate + AMP + diphosphate + H(+). Its pathway is amino-acid biosynthesis; L-arginine biosynthesis; L-arginine from L-ornithine and carbamoyl phosphate: step 2/3. The sequence is that of Argininosuccinate synthase from Halalkalibacterium halodurans (strain ATCC BAA-125 / DSM 18197 / FERM 7344 / JCM 9153 / C-125) (Bacillus halodurans).